The chain runs to 216 residues: Probable nicotinate-nucleotide adenylyltransferase (216 aa).

It belongs to the NadD family.

The enzyme catalyses nicotinate beta-D-ribonucleotide + ATP + H(+) = deamido-NAD(+) + diphosphate. It functions in the pathway cofactor biosynthesis; NAD(+) biosynthesis; deamido-NAD(+) from nicotinate D-ribonucleotide: step 1/1. In terms of biological role, catalyzes the reversible adenylation of nicotinate mononucleotide (NaMN) to nicotinic acid adenine dinucleotide (NaAD). This chain is Probable nicotinate-nucleotide adenylyltransferase, found in Geobacter sulfurreducens (strain ATCC 51573 / DSM 12127 / PCA).